A 350-amino-acid polypeptide reads, in one-letter code: Histidinol-phosphate aminotransferase (350 aa).

Position 212 is an N6-(pyridoxal phosphate)lysine (Lys-212).

It belongs to the class-II pyridoxal-phosphate-dependent aminotransferase family. Histidinol-phosphate aminotransferase subfamily. As to quaternary structure, homodimer. Pyridoxal 5'-phosphate serves as cofactor.

The catalysed reaction is L-histidinol phosphate + 2-oxoglutarate = 3-(imidazol-4-yl)-2-oxopropyl phosphate + L-glutamate. The protein operates within amino-acid biosynthesis; L-histidine biosynthesis; L-histidine from 5-phospho-alpha-D-ribose 1-diphosphate: step 7/9. This is Histidinol-phosphate aminotransferase from Geobacter sulfurreducens (strain ATCC 51573 / DSM 12127 / PCA).